Consider the following 408-residue polypeptide: Peptidase T (408 aa).

His-78 is a Zn(2+) binding site. The active site involves Asp-80. Asp-140 lines the Zn(2+) pocket. Catalysis depends on Glu-174, which acts as the Proton acceptor. Zn(2+) is bound by residues Glu-175, Asp-197, and His-379.

The protein belongs to the peptidase M20B family. The cofactor is Zn(2+).

It is found in the cytoplasm. It carries out the reaction Release of the N-terminal residue from a tripeptide.. Functionally, cleaves the N-terminal amino acid of tripeptides. The polypeptide is Peptidase T (Staphylococcus aureus (strain Mu3 / ATCC 700698)).